A 59-amino-acid chain; its full sequence is Aedesin (59 aa).

The first 23 residues, 1–23 (MNFTKLFAIVLLAALVLLGQTEA), serve as a signal peptide directing secretion.

Belongs to the cecropin family. In terms of tissue distribution, salivary gland (at protein level).

The protein localises to the secreted. Its function is as follows. Antimicrobial peptide. Exhibits antibacterial activity against Gram-negative bacteria, such as Escherichia coli, Pseudomonas aeruginosa, Acinetobacter baumannii and Klebsiella pneumoniae. Shows no antibacterial effects against Gram-positive bacteria, such as Staphylococcus aureus, Enterococcus faecalis and Enterococcus faecium. Exhibits antiviral activity against all four dengue virus serotypes and chikungunya virus. Exhibits leishmanicidal activity. Partially neutralizes lipopolysaccharides (LPS). Exhibits anti-inflammatory properties: inhibits LPS-induced iNOS/NOS2 transcription, nitric oxide (NO) and pro-inflammatory cytokine production in mouse macrophages and human peripheral blood mononuclear cells (PBMCs); inhibits LPS-induced activation of MAPK and NF-kappa-B signaling pathways in mouse macrophages. This is Aedesin from Aedes aegypti (Yellowfever mosquito).